The chain runs to 161 residues: 3-isopropylmalate dehydratase small subunit (161 aa).

This sequence belongs to the LeuD family. LeuD type 2 subfamily. As to quaternary structure, heterodimer of LeuC and LeuD.

The catalysed reaction is (2R,3S)-3-isopropylmalate = (2S)-2-isopropylmalate. It functions in the pathway amino-acid biosynthesis; L-leucine biosynthesis; L-leucine from 3-methyl-2-oxobutanoate: step 2/4. Functionally, catalyzes the isomerization between 2-isopropylmalate and 3-isopropylmalate, via the formation of 2-isopropylmaleate. The protein is 3-isopropylmalate dehydratase small subunit of Metallosphaera sedula (strain ATCC 51363 / DSM 5348 / JCM 9185 / NBRC 15509 / TH2).